An 860-amino-acid polypeptide reads, in one-letter code: Leucine--tRNA ligase (860 aa).

A 'HIGH' region motif is present at residues 42-52 (PYPSGRLHMGH). The 'KMSKS' region motif lies at 619–623 (KMSKS). Lys-622 lines the ATP pocket.

Belongs to the class-I aminoacyl-tRNA synthetase family.

Its subcellular location is the cytoplasm. It catalyses the reaction tRNA(Leu) + L-leucine + ATP = L-leucyl-tRNA(Leu) + AMP + diphosphate. The polypeptide is Leucine--tRNA ligase (Mannheimia succiniciproducens (strain KCTC 0769BP / MBEL55E)).